The primary structure comprises 692 residues: Elongation factor G (692 aa).

The region spanning 8 to 282 (ENTRNIGIMA…GVVDYLPSPL (275 aa)) is the tr-type G domain. Residues 17-24 (AHIDAGKT), 81-85 (DTPGH), and 135-138 (NKMD) contribute to the GTP site.

Belongs to the TRAFAC class translation factor GTPase superfamily. Classic translation factor GTPase family. EF-G/EF-2 subfamily.

Its subcellular location is the cytoplasm. In terms of biological role, catalyzes the GTP-dependent ribosomal translocation step during translation elongation. During this step, the ribosome changes from the pre-translocational (PRE) to the post-translocational (POST) state as the newly formed A-site-bound peptidyl-tRNA and P-site-bound deacylated tRNA move to the P and E sites, respectively. Catalyzes the coordinated movement of the two tRNA molecules, the mRNA and conformational changes in the ribosome. In Geobacillus thermodenitrificans (strain NG80-2), this protein is Elongation factor G.